A 593-amino-acid chain; its full sequence is ABC1 family protein lscO (593 aa).

Disordered stretches follow at residues 1–29 and 441–467; these read MDVA…GGKK and PYKN…EERK. 2 stretches are compositionally biased toward basic and acidic residues: residues 8-22 and 457-467; these read MERH…DDGT and QRTKETPEERK.

Belongs to the protein kinase superfamily. ADCK protein kinase family.

Its function is as follows. ABC1 family protein; part of the gene cluster that mediates the biosynthesis of the lipopeptide antibiotics leucinostatins that show extensive biological activities, including antimalarial, antiviral, antibacterial, antifungal, and antitumor activities, as well as phytotoxic. The function of lcsO within the leucinostatins biosynthesis has not been identified yet. The polypeptide is ABC1 family protein lscO (Purpureocillium lilacinum (Paecilomyces lilacinus)).